Reading from the N-terminus, the 703-residue chain is MAQRDLKFTRNIGIAAHIDAGKTTTTERILYYTGISHKIGEVHDGAATMDWMEQEQERGITITSAATHCKWMYRDQEFTVNIIDTPGHVDFTVEVERSLRVLDGVVALFSAVDGVEPQSETVWRQADKYRVPRLGFVNKMDRQGADFFNVCRQVREMLGGNPVPLQVPIGDEIDFKGVVDLISKKAIIWNDEDHGMTYDTIEIPEELLDDVNKYRAELVEAVAEYDEALMEKFFEDESSITEDEIIAALRAATIDMSIIPMMCGSAFKNKGVQAMLDAVMRYLPSPADVEAIEGTNPDTGEEESRKPHVDSPFAALAFKIATDPFVGRLAFFRAYSGTLDAGSYVLNVRSGKKERISRIYQMHSNKQEPIDSIEAGDIGAAVGFKDIKTGDTLTDMKHPIVLESMSFPAPVIGIAVEPKTKADVEKMGMALGKLAEEDPTFTVKTDENSGQTIISGMGELHLEIIIDRMKREFKVEVNVGEPQVEYKETITKSADHREVYKKQSGGRGKFADIVFEMGPIDEDFEGTGLQFVDVIKGGRIPKEFVPSVEKGFKEAMKNGPLAGFTMDSLKVTLKDGSFHPVDSDQLSFELAAKMGYKDAAKKAGAVILEPIMKVEVVTPEENMGDIVGDLNRRRGQVNNMSDRSGAKVIKAEVPLSEMFGYVTTLRTLSSGRATSTMEFSHYAETPSNISEEVIKAAKGAANE.

Residues 7–287 (KFTRNIGIAA…AVMRYLPSPA (281 aa)) enclose the tr-type G domain. GTP-binding positions include 16–23 (AHIDAGKT), 84–88 (DTPGH), and 138–141 (NKMD).

It belongs to the TRAFAC class translation factor GTPase superfamily. Classic translation factor GTPase family. EF-G/EF-2 subfamily.

The protein resides in the cytoplasm. In terms of biological role, catalyzes the GTP-dependent ribosomal translocation step during translation elongation. During this step, the ribosome changes from the pre-translocational (PRE) to the post-translocational (POST) state as the newly formed A-site-bound peptidyl-tRNA and P-site-bound deacylated tRNA move to the P and E sites, respectively. Catalyzes the coordinated movement of the two tRNA molecules, the mRNA and conformational changes in the ribosome. The protein is Elongation factor G of Christiangramia forsetii (strain DSM 17595 / CGMCC 1.15422 / KT0803) (Gramella forsetii).